Here is a 380-residue protein sequence, read N- to C-terminus: Cytochrome b (380 aa).

The next 4 membrane-spanning stretches (helical) occupy residues 34–54 (FGSL…LLAM), 78–99 (WLIR…YMHI), 114–134 (WNTG…GYVL), and 179–199 (FFAL…IHLT). Residues histidine 84 and histidine 98 each coordinate heme b. Histidine 183 and histidine 197 together coordinate heme b. Histidine 202 provides a ligand contact to a ubiquinone. 4 helical membrane-spanning segments follow: residues 227-247 (LKDI…ALFT), 289-309 (LGGV…PLLH), 321-341 (LSQS…WVGS), and 348-368 (FIII…ILLP).

The protein belongs to the cytochrome b family. As to quaternary structure, the cytochrome bc1 complex contains 11 subunits: 3 respiratory subunits (MT-CYB, CYC1 and UQCRFS1), 2 core proteins (UQCRC1 and UQCRC2) and 6 low-molecular weight proteins (UQCRH/QCR6, UQCRB/QCR7, UQCRQ/QCR8, UQCR10/QCR9, UQCR11/QCR10 and a cleavage product of UQCRFS1). This cytochrome bc1 complex then forms a dimer. Requires heme b as cofactor.

Its subcellular location is the mitochondrion inner membrane. Its function is as follows. Component of the ubiquinol-cytochrome c reductase complex (complex III or cytochrome b-c1 complex) that is part of the mitochondrial respiratory chain. The b-c1 complex mediates electron transfer from ubiquinol to cytochrome c. Contributes to the generation of a proton gradient across the mitochondrial membrane that is then used for ATP synthesis. This chain is Cytochrome b (MT-CYB), found in Falco peregrinus (Peregrine falcon).